A 280-amino-acid polypeptide reads, in one-letter code: Shikimate dehydrogenase (NADP(+)) (280 aa).

Residues 15–17 (SLS) and threonine 62 each bind shikimate. Lysine 66 functions as the Proton acceptor in the catalytic mechanism. Residues asparagine 88 and aspartate 104 each coordinate shikimate. NADP(+) is bound by residues 128-132 (GAGGA), 151-156 (NRTEGR), and isoleucine 222. Shikimate is bound at residue tyrosine 224. Glycine 245 is a binding site for NADP(+).

Belongs to the shikimate dehydrogenase family. In terms of assembly, homodimer.

The enzyme catalyses shikimate + NADP(+) = 3-dehydroshikimate + NADPH + H(+). It participates in metabolic intermediate biosynthesis; chorismate biosynthesis; chorismate from D-erythrose 4-phosphate and phosphoenolpyruvate: step 4/7. Its function is as follows. Involved in the biosynthesis of the chorismate, which leads to the biosynthesis of aromatic amino acids. Catalyzes the reversible NADPH linked reduction of 3-dehydroshikimate (DHSA) to yield shikimate (SA). The chain is Shikimate dehydrogenase (NADP(+)) from Methanosarcina barkeri (strain Fusaro / DSM 804).